The sequence spans 1487 residues: Chromosome partition protein MukB (1487 aa).

34–41 provides a ligand contact to ATP; sequence GGNGAGKS. Coiled coils occupy residues 297–426, 460–666, 781–806, 836–1111, and 1210–1266; these read SSRE…LEKA, ALKH…RLAS, RAAR…AKAA, EQAL…RTFV, and VEAI…LSNI. Residues 667–784 form a flexible hinge region; the sequence is PGGSNDPRLK…VIPLFGRAAR (118 aa).

This sequence belongs to the SMC family. MukB subfamily. In terms of assembly, homodimerization via its hinge domain. Binds to DNA via its C-terminal region. Interacts, and probably forms a ternary complex, with MukE and MukF via its C-terminal region. The complex formation is stimulated by calcium or magnesium. Interacts with tubulin-related protein FtsZ.

The protein localises to the cytoplasm. It is found in the nucleoid. In terms of biological role, plays a central role in chromosome condensation, segregation and cell cycle progression. Functions as a homodimer, which is essential for chromosome partition. Involved in negative DNA supercoiling in vivo, and by this means organize and compact chromosomes. May achieve or facilitate chromosome segregation by condensation DNA from both sides of a centrally located replisome during cell division. The polypeptide is Chromosome partition protein MukB (Vibrio vulnificus (strain CMCP6)).